The primary structure comprises 677 residues: mRNA export factor Gle1 (677 aa).

Basic and acidic residues predominate over residues 34 to 48 (EDREPIWVEGSRKTP). Disordered regions lie at residues 34 to 65 (EDREPIWVEGSRKTPEPPLPEESPAPEPNNEI), 113 to 136 (KQDAMRLSRETQQRKEERQRDQLQ), and 294 to 366 (ERQR…ATST). The span at 49–60 (EPPLPEESPAPE) shows a compositional bias: pro residues. Coiled-coil stretches lie at residues 122–179 (ETQQ…QKLH) and 280–346 (QQQL…AANV). Residues 294 to 340 (ERQRQQQQEEERQKLEEQQKLEEQEKLRKEKEESAAKEKQQEAETAK) are compositionally biased toward basic and acidic residues.

Belongs to the GLE1 family. May associate with the NPC.

The protein localises to the cytoplasm. Its subcellular location is the nucleus. The protein resides in the nuclear pore complex. Its function is as follows. Required for the export of mRNAs containing poly(A) tails from the nucleus into the cytoplasm. May be involved in the terminal step of the mRNA transport through the nuclear pore complex (NPC). The protein is mRNA export factor Gle1 of Drosophila melanogaster (Fruit fly).